Reading from the N-terminus, the 200-residue chain is Holliday junction branch migration complex subunit RuvA (200 aa).

Residues M1 to A63 are domain I. The domain II stretch occupies residues D64 to A142. A flexible linker region spans residues G143–E151. Positions E151–R200 are domain III.

Belongs to the RuvA family. Homotetramer. Forms an RuvA(8)-RuvB(12)-Holliday junction (HJ) complex. HJ DNA is sandwiched between 2 RuvA tetramers; dsDNA enters through RuvA and exits via RuvB. An RuvB hexamer assembles on each DNA strand where it exits the tetramer. Each RuvB hexamer is contacted by two RuvA subunits (via domain III) on 2 adjacent RuvB subunits; this complex drives branch migration. In the full resolvosome a probable DNA-RuvA(4)-RuvB(12)-RuvC(2) complex forms which resolves the HJ.

It localises to the cytoplasm. The RuvA-RuvB-RuvC complex processes Holliday junction (HJ) DNA during genetic recombination and DNA repair, while the RuvA-RuvB complex plays an important role in the rescue of blocked DNA replication forks via replication fork reversal (RFR). RuvA specifically binds to HJ cruciform DNA, conferring on it an open structure. The RuvB hexamer acts as an ATP-dependent pump, pulling dsDNA into and through the RuvAB complex. HJ branch migration allows RuvC to scan DNA until it finds its consensus sequence, where it cleaves and resolves the cruciform DNA. The chain is Holliday junction branch migration complex subunit RuvA from Salinispora tropica (strain ATCC BAA-916 / DSM 44818 / JCM 13857 / NBRC 105044 / CNB-440).